A 421-amino-acid chain; its full sequence is Serine hydroxymethyltransferase (421 aa).

(6S)-5,6,7,8-tetrahydrofolate is bound by residues L121 and 125-127; that span reads GHL. K229 carries the N6-(pyridoxal phosphate)lysine modification.

The protein belongs to the SHMT family. Homodimer. Pyridoxal 5'-phosphate serves as cofactor.

Its subcellular location is the cytoplasm. It carries out the reaction (6R)-5,10-methylene-5,6,7,8-tetrahydrofolate + glycine + H2O = (6S)-5,6,7,8-tetrahydrofolate + L-serine. It participates in one-carbon metabolism; tetrahydrofolate interconversion. It functions in the pathway amino-acid biosynthesis; glycine biosynthesis; glycine from L-serine: step 1/1. In terms of biological role, catalyzes the reversible interconversion of serine and glycine with tetrahydrofolate (THF) serving as the one-carbon carrier. This reaction serves as the major source of one-carbon groups required for the biosynthesis of purines, thymidylate, methionine, and other important biomolecules. Also exhibits THF-independent aldolase activity toward beta-hydroxyamino acids, producing glycine and aldehydes, via a retro-aldol mechanism. In Haemophilus influenzae (strain PittGG), this protein is Serine hydroxymethyltransferase.